A 152-amino-acid polypeptide reads, in one-letter code: Ribosome maturation factor RimP (152 aa).

Belongs to the RimP family.

The protein resides in the cytoplasm. Required for maturation of 30S ribosomal subunits. The polypeptide is Ribosome maturation factor RimP (Idiomarina loihiensis (strain ATCC BAA-735 / DSM 15497 / L2-TR)).